Consider the following 247-residue polypeptide: UPF0612 protein P20C8.01c (247 aa).

Coiled-coil stretches lie at residues 27–63 (IKRY…MKYE) and 138–225 (DTVQ…DARS).

The protein belongs to the UPF0612 family.

The protein resides in the cytoplasm. This is UPF0612 protein P20C8.01c from Schizosaccharomyces pombe (strain 972 / ATCC 24843) (Fission yeast).